The chain runs to 225 residues: Uracil-DNA glycosylase (225 aa).

Catalysis depends on aspartate 65, which acts as the Proton acceptor.

It belongs to the uracil-DNA glycosylase (UDG) superfamily. UNG family.

It is found in the cytoplasm. It catalyses the reaction Hydrolyzes single-stranded DNA or mismatched double-stranded DNA and polynucleotides, releasing free uracil.. In terms of biological role, excises uracil residues from the DNA which can arise as a result of misincorporation of dUMP residues by DNA polymerase or due to deamination of cytosine. The protein is Uracil-DNA glycosylase of Bacillus licheniformis (strain ATCC 14580 / DSM 13 / JCM 2505 / CCUG 7422 / NBRC 12200 / NCIMB 9375 / NCTC 10341 / NRRL NRS-1264 / Gibson 46).